The primary structure comprises 332 residues: Protein FAM9A (332 aa).

The segment covering 1-13 (MEPVGRKRSRKAA) has biased composition (basic residues). Disordered stretches follow at residues 1–114 (MEPV…EHTG) and 186–293 (QKDD…PTGV). 2 stretches are compositionally biased toward basic and acidic residues: residues 74–91 (GKDP…FTET) and 98–114 (DEHG…EHTG). Low complexity predominate over residues 196 to 217 (AAAAAAEAAAAAEAAAAAAEVI). Acidic residues predominate over residues 218–275 (VVEDEEEEEKEEEEEKEEEEEEGEEEGGGEEGEEGGGGGEGEETEEEEEEEEEEEEEE). The span at 276-285 (QIKAFQEKQK) shows a compositional bias: basic and acidic residues.

The protein belongs to the XLR/SYCP3 family. Expressed exclusively in testis.

It localises to the nucleus. The protein resides in the nucleolus. The protein is Protein FAM9A of Homo sapiens (Human).